Reading from the N-terminus, the 164-residue chain is Peptide deformylase (164 aa).

Cys87 and His129 together coordinate Fe cation. The active site involves Glu130. Fe cation is bound at residue His133.

Belongs to the polypeptide deformylase family. Requires Fe(2+) as cofactor.

The catalysed reaction is N-terminal N-formyl-L-methionyl-[peptide] + H2O = N-terminal L-methionyl-[peptide] + formate. Removes the formyl group from the N-terminal Met of newly synthesized proteins. Requires at least a dipeptide for an efficient rate of reaction. N-terminal L-methionine is a prerequisite for activity but the enzyme has broad specificity at other positions. The protein is Peptide deformylase of Thermotoga neapolitana (strain ATCC 49049 / DSM 4359 / NBRC 107923 / NS-E).